Reading from the N-terminus, the 287-residue chain is Energy-coupling factor transporter ATP-binding protein EcfA2 (287 aa).

The ABC transporter domain occupies 3-246 (VKFSQVSYVY…TNYVNQLHLD (244 aa)). Position 40-47 (40-47 (GQTGSGKS)) interacts with ATP.

Belongs to the ABC transporter superfamily. Energy-coupling factor EcfA family. In terms of assembly, forms a stable energy-coupling factor (ECF) transporter complex composed of 2 membrane-embedded substrate-binding proteins (S component), 2 ATP-binding proteins (A component) and 2 transmembrane proteins (T component).

It is found in the cell membrane. In terms of biological role, ATP-binding (A) component of a common energy-coupling factor (ECF) ABC-transporter complex. Unlike classic ABC transporters this ECF transporter provides the energy necessary to transport a number of different substrates. The polypeptide is Energy-coupling factor transporter ATP-binding protein EcfA2 (Staphylococcus saprophyticus subsp. saprophyticus (strain ATCC 15305 / DSM 20229 / NCIMB 8711 / NCTC 7292 / S-41)).